A 769-amino-acid polypeptide reads, in one-letter code: Integrin beta-8 (769 aa).

Positions 1–42 (MCGSALAFFTAAFVCLQNDRRGPASFLWAAWVFSLVLGLGQG) are cleaved as a signal peptide. Topologically, residues 43 to 684 (EDNRCASSNA…ECFSSPSYLR (642 aa)) are extracellular. Residues 46-95 (RCASSNAASCARCLALGPECGWCVQEDFISGGSRSERCDIVSNLISKGCS) form the PSI domain. Disulfide bonds link C47–C65, C55–C469, C58–C83, C68–C94, C211–C218, C266–C307, C407–C419, C439–C467, C471–C491, C471–C494, C481–C494, C499–C528, C511–C526, C520–C531, C533–C546, C553–C567, C561–C572, C574–C583, C585–C609, C593–C607, C601–C612, C614–C624, C627–C630, C634–C661, and C640–C657. In terms of domain architecture, VWFA spans 146 to 384 (PVDLYYLVDV…NLVVEAYQKL (239 aa)). The Mg(2+) site is built by D154 and S156. Ca(2+) is bound at residue D193. The N-linked (GlcNAc...) asparagine glycan is linked to N233. Residues N249, D251, P253, and E254 each coordinate Ca(2+). A Mg(2+)-binding site is contributed by E254. The N-linked (GlcNAc...) asparagine glycan is linked to N402. Residues N421, N431, N456, and N466 are each glycosylated (N-linked (GlcNAc...) asparagine). 4 I-EGF domains span residues 471 to 495 (CEDN…FQCD), 499 to 547 (CHFD…KYCE), 548 to 584 (KDDF…DRCQ), and 585 to 625 (CPSA…RFCE). N648 is a glycosylation site (N-linked (GlcNAc...) asparagine). A helical membrane pass occupies residues 685 to 704 (IFFIIFIVTFLIGLLKVLII). Topologically, residues 705–769 (RQVILQWNSN…NAHETFRCNF (65 aa)) are cytoplasmic.

It belongs to the integrin beta chain family. In terms of assembly, heterodimer of an alpha and a beta subunit. Beta-8 (ITGB8) associates with alpha-V (ITGAV) to form ITGAV:ITGB8. ITGAV:ITGB8 interacts with TGFB1. In terms of tissue distribution, placenta, kidney, brain, ovary, uterus and in several transformed cells. Transiently expressed in 293 human embryonic kidney cells.

The protein resides in the cell membrane. Its function is as follows. Integrin alpha-V:beta-8 (ITGAV:ITGB8) is a receptor for fibronectin. It recognizes the sequence R-G-D in its ligands. Integrin alpha-V:beta-6 (ITGAV:ITGB6) mediates R-G-D-dependent release of transforming growth factor beta-1 (TGF-beta-1) from regulatory Latency-associated peptide (LAP), thereby playing a key role in TGF-beta-1 activation on the surface of activated regulatory T-cells (Tregs). Required during vasculogenesis. The protein is Integrin beta-8 of Homo sapiens (Human).